The chain runs to 320 residues: MKLNSLINLIQKSIYSCTLLLTILNIICIAPNSSNAFPIYAQQAYESPREATGRIVCANCHLAQKPVEIEAPQAVLPNTVFETVVKIPYDNNAKQILGNGSKGGLNVGAVVILPEGFKLAPANRLSPELKEKTKNLYIQPYSTKQSNILVIGPIPGDKNREIIFPILSPDPAKDKQAHFFKYPIYVGGNRGRGQIYPTGDKSNNNLISASASGKINKIEALEKGGFIVHITSTKDSEVNQSIPAGVELKVREGETIQLDQAISKDPNVGGFGQNETEIVLQSPNRIKGMIAFFFVSVLAQIFFVLKKKQFEKVQAAEMNF.

Positions 1–36 (MKLNSLINLIQKSIYSCTLLLTILNIICIAPNSSNA) are cleaved as a signal peptide. Residues Phe-37, Cys-57, Cys-60, and His-61 each contribute to the heme site. A helical membrane pass occupies residues 286-305 (IKGMIAFFFVSVLAQIFFVL).

Belongs to the cytochrome f family. In terms of assembly, the 4 large subunits of the cytochrome b6-f complex are cytochrome b6, subunit IV (17 kDa polypeptide, petD), cytochrome f and the Rieske protein, while the 4 small subunits are PetG, PetL, PetM and PetN. The complex functions as a dimer. The cofactor is heme.

It is found in the plastid. The protein resides in the chloroplast thylakoid membrane. Functionally, component of the cytochrome b6-f complex, which mediates electron transfer between photosystem II (PSII) and photosystem I (PSI), cyclic electron flow around PSI, and state transitions. This is Cytochrome f (petA) from Porphyra purpurea (Red seaweed).